The sequence spans 207 residues: FMN-dependent NADH:quinone oxidoreductase 3 (207 aa).

Residues serine 10 and 16-18 (SIS) contribute to the FMN site.

This sequence belongs to the azoreductase type 1 family. As to quaternary structure, homodimer. FMN is required as a cofactor.

The enzyme catalyses 2 a quinone + NADH + H(+) = 2 a 1,4-benzosemiquinone + NAD(+). It carries out the reaction N,N-dimethyl-1,4-phenylenediamine + anthranilate + 2 NAD(+) = 2-(4-dimethylaminophenyl)diazenylbenzoate + 2 NADH + 2 H(+). In terms of biological role, quinone reductase that provides resistance to thiol-specific stress caused by electrophilic quinones. Also exhibits azoreductase activity. Catalyzes the reductive cleavage of the azo bond in aromatic azo compounds to the corresponding amines. The polypeptide is FMN-dependent NADH:quinone oxidoreductase 3 (Burkholderia lata (strain ATCC 17760 / DSM 23089 / LMG 22485 / NCIMB 9086 / R18194 / 383)).